We begin with the raw amino-acid sequence, 565 residues long: Nephronectin (565 aa).

The first 19 residues, 1–19 (MDFLLALVLVSSLYLQAAA), serve as a signal peptide directing secretion. Residues 52 to 87 (SWGQCQPVCQPRCKHGECIGPNKCKCHPGYAGKTCN) form the EGF-like 1 domain. 6 disulfides stabilise this stretch: C56/C69, C60/C75, C77/C86, C93/C104, C100/C113, and C115/C127. The region spanning 89-128 (DLNECGLKPRPCKHRCMNTYGSYKCYCLNGYMLMPDGSCS) is the EGF-like 2; calcium-binding domain. The 37-residue stretch at 132–168 (TCSMANCQYGCDVVKGQIRCQCPSPGLQLAPDGRTCV) folds into the EGF-like 3 domain. Residues 169–213 (DVDECATGRASCPRFRQCVNTFGSYICKCHKGFDLMYIGGKYQCH) form the EGF-like 4; calcium-binding domain. 6 disulfide bridges follow: C173–C186, C180–C195, C197–C212, C218–C231, C225–C240, and C242–C253. The EGF-like 5; calcium-binding domain occupies 214-254 (DIDECSLGQYQCSSFARCYNIRGSYKCKCKEGYQGDGLTCV). The tract at residues 301–389 (YIPPIITNRP…KPRGDVFIPR (89 aa)) is disordered. A compositionally biased stretch (low complexity) spans 304-316 (PIITNRPTSKPTT). Residues 317–347 (RPTPKPTPIPTPPPPPPLPTELRTPLPPTTP) are compositionally biased toward pro residues. Residues 382–384 (RGD) carry the Integrin interaction motif. The region spanning 420–563 (HSCNFDHGLC…VSLKKGHCSE (144 aa)) is the MAM domain.

Belongs to the nephronectin family. Homodimer and homotrimer. As to expression, expressed in kidney and lung and to a lower extent in brain, pregnant uterus, placenta, thyroid gland and blood vessels.

The protein resides in the secreted. The protein localises to the extracellular space. It is found in the extracellular matrix. Its function is as follows. Functional ligand of integrin alpha-8/beta-1 in kidney development. Regulates the expression of GDNF with integrin alpha-8/beta-1 which is essential for kidney development. May also play a role in the development and function of various tissues, regulating cell adhesion, spreading and survival through the binding of several integrins. The chain is Nephronectin (NPNT) from Homo sapiens (Human).